A 305-amino-acid chain; its full sequence is Aspartate carbamoyltransferase catalytic subunit (305 aa).

Positions 58 and 59 each coordinate carbamoyl phosphate. L-aspartate is bound at residue Lys-86. Residues Arg-108, His-136, and Gln-139 each coordinate carbamoyl phosphate. L-aspartate-binding residues include Arg-169 and Arg-223. Gly-264 and Pro-265 together coordinate carbamoyl phosphate.

The protein belongs to the aspartate/ornithine carbamoyltransferase superfamily. ATCase family. Heterododecamer (2C3:3R2) of six catalytic PyrB chains organized as two trimers (C3), and six regulatory PyrI chains organized as three dimers (R2).

The enzyme catalyses carbamoyl phosphate + L-aspartate = N-carbamoyl-L-aspartate + phosphate + H(+). It functions in the pathway pyrimidine metabolism; UMP biosynthesis via de novo pathway; (S)-dihydroorotate from bicarbonate: step 2/3. Catalyzes the condensation of carbamoyl phosphate and aspartate to form carbamoyl aspartate and inorganic phosphate, the committed step in the de novo pyrimidine nucleotide biosynthesis pathway. This is Aspartate carbamoyltransferase catalytic subunit from Syntrophobacter fumaroxidans (strain DSM 10017 / MPOB).